A 314-amino-acid polypeptide reads, in one-letter code: Olfactory receptor 10A6 (314 aa).

Residues 1 to 25 lie on the Extracellular side of the membrane; sequence MERQNQSCVVEFILLGFSNYPELQG. Residue N5 is glycosylated (N-linked (GlcNAc...) asparagine). The chain crosses the membrane as a helical span at residues 26–46; that stretch reads QLFVAFLVIYLVTLIGNAIII. At 47-54 the chain is on the cytoplasmic side; that stretch reads VIVSLDQS. The chain crosses the membrane as a helical span at residues 55-75; the sequence is LHVPMYLFLLNLSVVDLSFSA. Over 76-99 the chain is Extracellular; it reads VIMPEMLVVLSTEKTTISFGGCFA. C97 and C189 are joined by a disulfide. A helical transmembrane segment spans residues 100–120; the sequence is QMYFILLFGGAECFLLGAMAY. Residues 121–139 are Cytoplasmic-facing; sequence DRFAAICHPLNYQMIMNKG. The helical transmembrane segment at 140–160 threads the bilayer; sequence VFMKLIIFSWALGFMLGTVQT. At 161-197 the chain is on the extracellular side; sequence SWVSSFPFCGLNEINHISCETPAVLELACADTFLFEI. The chain crosses the membrane as a helical span at residues 198 to 217; that stretch reads YAFTGTFLIILVPFLLILLS. The Cytoplasmic segment spans residues 218-237; it reads YIRVLFAILKMPSTTGRQKA. Residues 238–258 form a helical membrane-spanning segment; that stretch reads FSTCAAHLTSVTLFYGTASMT. Residues 259–271 lie on the Extracellular side of the membrane; it reads YLQPKSGYSPETK. The chain crosses the membrane as a helical span at residues 272–292; it reads KVMSLSYSLLTPLLNLLIYSL. The Cytoplasmic portion of the chain corresponds to 293–314; it reads RNSEMKRALMKLWRRRVVLHTI.

This sequence belongs to the G-protein coupled receptor 1 family.

The protein localises to the cell membrane. Functionally, odorant receptor. The sequence is that of Olfactory receptor 10A6 (OR10A6) from Homo sapiens (Human).